The following is a 362-amino-acid chain: 3-isopropylmalate dehydrogenase (362 aa).

78-91 is an NAD(+) binding site; it reads GPKWESLPPDEQPE. Substrate is bound by residues Arg99, Arg109, Arg138, and Asp227. The Mg(2+) site is built by Asp227, Asp251, and Asp255. 285–297 is an NAD(+) binding site; that stretch reads GSAPDIAGQGIAN.

It belongs to the isocitrate and isopropylmalate dehydrogenases family. LeuB type 1 subfamily. Homodimer. Mg(2+) serves as cofactor. The cofactor is Mn(2+).

The protein resides in the cytoplasm. The catalysed reaction is (2R,3S)-3-isopropylmalate + NAD(+) = 4-methyl-2-oxopentanoate + CO2 + NADH. Its pathway is amino-acid biosynthesis; L-leucine biosynthesis; L-leucine from 3-methyl-2-oxobutanoate: step 3/4. In terms of biological role, catalyzes the oxidation of 3-carboxy-2-hydroxy-4-methylpentanoate (3-isopropylmalate) to 3-carboxy-4-methyl-2-oxopentanoate. The product decarboxylates to 4-methyl-2 oxopentanoate. The protein is 3-isopropylmalate dehydrogenase of Geobacter sulfurreducens (strain ATCC 51573 / DSM 12127 / PCA).